The primary structure comprises 141 residues: Sec-independent protein translocase protein TatB (141 aa).

A helical transmembrane segment spans residues 1–21 (MFGISFSELLLVGLVALLVLG). A disordered region spans residues 74 to 141 (EAQKLLAPLT…SPPSETPRNP (68 aa)). Residues 89–115 (QETPPPAAESPAPSVPTPPPTSTPAVP) are compositionally biased toward pro residues. Residues 116–129 (PADAAAPPAVAAST) are compositionally biased toward low complexity. Over residues 130-141 (PPSPPSETPRNP) the composition is skewed to pro residues.

Belongs to the TatB family. As to quaternary structure, the Tat system comprises two distinct complexes: a TatABC complex, containing multiple copies of TatA, TatB and TatC subunits, and a separate TatA complex, containing only TatA subunits. Substrates initially bind to the TatABC complex, which probably triggers association of the separate TatA complex to form the active translocon.

Its subcellular location is the cell inner membrane. In terms of biological role, part of the twin-arginine translocation (Tat) system that transports large folded proteins containing a characteristic twin-arginine motif in their signal peptide across membranes. Together with TatC, TatB is part of a receptor directly interacting with Tat signal peptides. TatB may form an oligomeric binding site that transiently accommodates folded Tat precursor proteins before their translocation. The protein is Sec-independent protein translocase protein TatB of Pseudomonas aeruginosa (strain ATCC 15692 / DSM 22644 / CIP 104116 / JCM 14847 / LMG 12228 / 1C / PRS 101 / PAO1).